The following is a 172-amino-acid chain: C-phycocyanin subunit beta (172 aa).

Asparagine 72 carries the post-translational modification N4-methylasparagine. Residues cysteine 82 and cysteine 153 each contribute to the (2R,3E)-phycocyanobilin site.

The protein belongs to the phycobiliprotein family. Heterodimer of an alpha and a beta subunit, which further assembles into trimers and the trimers into hexamers. Post-translationally, contains two covalently linked bilin chromophores. The chromophore on position 82 is added by the phycocyanobilin lyase CpcUS, while the chromophore on position 153 is added by the phycocyanobilin lyase CpcT.

The protein resides in the cellular thylakoid membrane. In terms of biological role, light-harvesting photosynthetic bile pigment-protein from the phycobiliprotein complex (phycobilisome, PBS). Phycocyanin is the major phycobiliprotein in the PBS rod. The chain is C-phycocyanin subunit beta (cpcB) from Picosynechococcus sp. (strain ATCC 27264 / PCC 7002 / PR-6) (Agmenellum quadruplicatum).